The following is a 209-amino-acid chain: Large ribosomal subunit protein uL3 (209 aa).

Residues 127 to 166 (NFGGGQRTHGQSDRLRAPGSIGGASDPSKTFKGTKMGGRM) are disordered.

This sequence belongs to the universal ribosomal protein uL3 family. In terms of assembly, part of the 50S ribosomal subunit. Forms a cluster with proteins L14 and L19.

Functionally, one of the primary rRNA binding proteins, it binds directly near the 3'-end of the 23S rRNA, where it nucleates assembly of the 50S subunit. The chain is Large ribosomal subunit protein uL3 from Chlorobium phaeovibrioides (strain DSM 265 / 1930) (Prosthecochloris vibrioformis (strain DSM 265)).